The chain runs to 422 residues: Secernin-3 (422 aa).

A propeptide spanning residues 1-5 (MEPCS) is cleaved from the precursor. The active site involves Cys6. Cys6 is subject to Glyoxylic acid (Cys); alternate. Cys6 bears the Pyruvic acid (Cys); alternate mark.

The protein belongs to the peptidase C69 family. Secernin subfamily.

Its function is as follows. Plays a role in thermal nociception. This Bos taurus (Bovine) protein is Secernin-3 (SCRN3).